The primary structure comprises 128 residues: Large ribosomal subunit protein bL17 (128 aa).

This sequence belongs to the bacterial ribosomal protein bL17 family. As to quaternary structure, part of the 50S ribosomal subunit. Contacts protein L32.

This chain is Large ribosomal subunit protein bL17, found in Streptococcus gordonii (strain Challis / ATCC 35105 / BCRC 15272 / CH1 / DL1 / V288).